The chain runs to 193 residues: Interleukin-18 (193 aa).

A propeptide spanning residues 1-36 (MAAEPVEDNCINFVAMKFIDNTLYFIAEDDENLESD) is cleaved from the precursor.

It belongs to the IL-1 family. In terms of assembly, forms a ternary complex with ligand-binding receptor subunit IL18R1 and signaling receptor subunit IL18RAP at the plasma membrane. Mature IL18 first binds to IL18R1 forming a low affinity binary complex, which then interacts with IL18RAP to form a high affinity ternary complex that signals inside the cell. Interacts with cargo receptor TMED10; the interaction mediates the translocation from the cytoplasm into the ERGIC (endoplasmic reticulum-Golgi intermediate compartment) and thereby secretion. In terms of processing, the pro-IL-18 precursor is processed by CASP1, CASP4 or CASP5 to yield its mature, active form. The pro-IL-18 precursor features autoinhibitory interactions between the propeptide and the post-cleavage-site region, preventing recognition by the IL18R1 receptor. Processing by CASP1, CASP4 or CASP5 induces conformational changes to generate critical receptor-binding sites. The mature form is then secreted and released in the extracellular milieu by passing through the gasdermin-D (GSDMD) pore. In contrast, cleavage by CASP3 inactivates IL18. Expressed in ovarian carcinoma but undetectable in normal ovarian epithelial cells. Resistant to proteolytic activation by caspase-1 and -4.

The protein localises to the cytoplasm. Its subcellular location is the cytosol. It localises to the secreted. Its function is as follows. Pro-inflammatory cytokine primarily involved in epithelial barrier repair, polarized T-helper 1 (Th1) cell and natural killer (NK) cell immune responses. Upon binding to IL18R1 and IL18RAP, forms a signaling ternary complex which activates NF-kappa-B, triggering synthesis of inflammatory mediators. Synergizes with IL12/interleukin-12 to induce IFNG synthesis from T-helper 1 (Th1) cells and natural killer (NK) cells. Involved in transduction of inflammation downstream of pyroptosis: its mature form is specifically released in the extracellular milieu by passing through the gasdermin-D (GSDMD) pore. This Homo sapiens (Human) protein is Interleukin-18.